The primary structure comprises 98 residues: Large ribosomal subunit protein mL53 (98 aa).

This sequence belongs to the mitochondrion-specific ribosomal protein mL53 family. As to quaternary structure, component of the mitochondrial large ribosomal subunit (mt-LSU). Mature N.crassa 74S mitochondrial ribosomes consist of a small (37S) and a large (54S) subunit. The 37S small subunit contains a 16S ribosomal RNA (16S mt-rRNA) and 32 different proteins. The 54S large subunit contains a 23S rRNA (23S mt-rRNA) and 42 different proteins.

The protein localises to the mitochondrion. In terms of biological role, component of the mitochondrial ribosome (mitoribosome), a dedicated translation machinery responsible for the synthesis of mitochondrial genome-encoded proteins, including at least some of the essential transmembrane subunits of the mitochondrial respiratory chain. The mitoribosomes are attached to the mitochondrial inner membrane and translation products are cotranslationally integrated into the membrane. The protein is Large ribosomal subunit protein mL53 (mrpl44) of Neurospora crassa (strain ATCC 24698 / 74-OR23-1A / CBS 708.71 / DSM 1257 / FGSC 987).